A 216-amino-acid polypeptide reads, in one-letter code: Orotate phosphoribosyltransferase (216 aa).

5-phospho-alpha-D-ribose 1-diphosphate contacts are provided by residues Arg100, Lys104, His106, and 126–134 (EDLISTGGS). Orotate is bound at residue Ser130.

This sequence belongs to the purine/pyrimidine phosphoribosyltransferase family. PyrE subfamily. In terms of assembly, homodimer. Interacts with BrxC. Mg(2+) is required as a cofactor.

The enzyme catalyses orotidine 5'-phosphate + diphosphate = orotate + 5-phospho-alpha-D-ribose 1-diphosphate. It participates in pyrimidine metabolism; UMP biosynthesis via de novo pathway; UMP from orotate: step 1/2. Its function is as follows. Catalyzes the transfer of a ribosyl phosphate group from 5-phosphoribose 1-diphosphate to orotate, leading to the formation of orotidine monophosphate (OMP). The protein is Orotate phosphoribosyltransferase of Bacillus subtilis (strain 168).